We begin with the raw amino-acid sequence, 173 residues long: C-phycocyanin beta subunit (173 aa).

Asn73 is modified (N4-methylasparagine). (2R,3E)-phycocyanobilin contacts are provided by Cys83 and Cys154.

Belongs to the phycobiliprotein family. In terms of assembly, heterodimer of an alpha and a beta subunit, which further assembles into trimers and the trimers into hexamers. In terms of processing, contains two covalently linked bilin chromophores.

It is found in the cellular thylakoid membrane. Functionally, light-harvesting photosynthetic bile pigment-protein from the phycobiliprotein complex (phycobilisome, PBS). Phycocyanin is the major phycobiliprotein in the PBS rod. The polypeptide is C-phycocyanin beta subunit (cpcB1) (Synechococcus elongatus (strain ATCC 33912 / PCC 7942 / FACHB-805) (Anacystis nidulans R2)).